The sequence spans 135 residues: uncharacterized protein (135 aa).

3 helical membrane-spanning segments follow: residues 13–35, 82–101, and 108–130; these read AKVI…AMYL, VAVF…LLSI, and IYRI…PLIL.

It is found in the cell membrane. This is an uncharacterized protein from Archaeoglobus fulgidus (strain ATCC 49558 / DSM 4304 / JCM 9628 / NBRC 100126 / VC-16).